Here is a 190-residue protein sequence, read N- to C-terminus: UPF0301 protein Pfl01_5311 (190 aa).

The protein belongs to the UPF0301 (AlgH) family.

The sequence is that of UPF0301 protein Pfl01_5311 from Pseudomonas fluorescens (strain Pf0-1).